The chain runs to 305 residues: UDP-3-O-acyl-N-acetylglucosamine deacetylase (305 aa).

Zn(2+)-binding residues include histidine 79, histidine 238, and aspartate 242. Catalysis depends on histidine 265, which acts as the Proton donor.

It belongs to the LpxC family. Zn(2+) serves as cofactor.

The catalysed reaction is a UDP-3-O-[(3R)-3-hydroxyacyl]-N-acetyl-alpha-D-glucosamine + H2O = a UDP-3-O-[(3R)-3-hydroxyacyl]-alpha-D-glucosamine + acetate. It functions in the pathway glycolipid biosynthesis; lipid IV(A) biosynthesis; lipid IV(A) from (3R)-3-hydroxytetradecanoyl-[acyl-carrier-protein] and UDP-N-acetyl-alpha-D-glucosamine: step 2/6. In terms of biological role, catalyzes the hydrolysis of UDP-3-O-myristoyl-N-acetylglucosamine to form UDP-3-O-myristoylglucosamine and acetate, the committed step in lipid A biosynthesis. The polypeptide is UDP-3-O-acyl-N-acetylglucosamine deacetylase (Aliivibrio fischeri (strain ATCC 700601 / ES114) (Vibrio fischeri)).